A 759-amino-acid chain; its full sequence is uncharacterized protein (759 aa).

This is an uncharacterized protein from Escherichia coli (strain K12).